The chain runs to 215 residues: Cytochrome b6 (215 aa).

A helical transmembrane segment spans residues 32 to 52; sequence IFYCIGGITFTCFIMQVASGF. Position 35 (Cys35) interacts with heme c. Residues His86 and His100 each coordinate heme b. Helical transmembrane passes span 90–110, 116–136, and 186–206; these read ASMM…TGGF, LTWV…VTGY, and LHTF…FLMI. Heme b contacts are provided by His187 and His202.

Belongs to the cytochrome b family. PetB subfamily. The 4 large subunits of the cytochrome b6-f complex are cytochrome b6, subunit IV (17 kDa polypeptide, PetD), cytochrome f and the Rieske protein, while the 4 small subunits are PetG, PetL, PetM and PetN. The complex functions as a dimer. It depends on heme b as a cofactor. The cofactor is heme c.

Its subcellular location is the plastid. The protein localises to the chloroplast thylakoid membrane. Its function is as follows. Component of the cytochrome b6-f complex, which mediates electron transfer between photosystem II (PSII) and photosystem I (PSI), cyclic electron flow around PSI, and state transitions. This chain is Cytochrome b6, found in Mesostigma viride (Green alga).